The chain runs to 280 residues: Type 1 encapsulin shell protein (280 aa).

It belongs to the encapsulin family. Family 1 subfamily. In terms of assembly, this encapsulin nanocompartment is formed by 60 subunits; monomers form pentamers which assemble to form shells. There are 12 pores where the pentamers meet as well as 3-fold axis channels and dimer channels; none are larger than 3-4 Angstroms in diameter. The N-terminus of the protein is inside the shell, the C-terminus is outside.

It is found in the encapsulin nanocompartment. Shell component of a type 1 encapsulin nanocompartment. Assembles into proteinaceous icosahedral shells 24 nm in diameter in the presence and absence of its ferritin cargo protein. The center of cargo-loaded nanocompartments is loaded with iron. The empty encapsulin nanocompartment sequesters about 2200 Fe ions while the cargo-loaded nanocompartment can maximally sequester about 4150 Fe ions. Does not have any detectable ferroxidase activity. The chain is Type 1 encapsulin shell protein from Rhodospirillum rubrum (strain ATCC 11170 / ATH 1.1.1 / DSM 467 / LMG 4362 / NCIMB 8255 / S1).